Reading from the N-terminus, the 76-residue chain is MTKETQSFEEMMQELERIVQKLDNETVSLEESLDLYQRGMKLSAACDTTLKNAEKKVNDLIKEEAEDVKNDESTDE.

The protein belongs to the XseB family. As to quaternary structure, heterooligomer composed of large and small subunits.

It is found in the cytoplasm. The enzyme catalyses Exonucleolytic cleavage in either 5'- to 3'- or 3'- to 5'-direction to yield nucleoside 5'-phosphates.. Bidirectionally degrades single-stranded DNA into large acid-insoluble oligonucleotides, which are then degraded further into small acid-soluble oligonucleotides. The polypeptide is Exodeoxyribonuclease 7 small subunit (Staphylococcus aureus (strain MRSA252)).